We begin with the raw amino-acid sequence, 116 residues long: Ig heavy chain V region 1B43 (116 aa).

The signal sequence occupies residues 1–18; sequence MRVLILLCLFTAFPGILS. A framework-1 region spans residues 19 to 48; that stretch reads DVQLQESGPDLVKPSQSLSLTCTVTGYSIT. Cysteines 40 and 114 form a disulfide. The complementarity-determining-1 stretch occupies residues 49–53; sequence SGYSW. Positions 54 to 67 are framework-2; sequence HWIRQFPGNKLEWM. The complementarity-determining-2 stretch occupies residues 68–84; it reads GYIHYSGNTSYNPSLKS. Residues 85–116 are framework-3; the sequence is RISITRDTSKNQFFLQLNSVTTEDTATYYCAR.

The protein is Ig heavy chain V region 1B43 of Mus musculus (Mouse).